The sequence spans 269 residues: Glucosyl-3-phosphoglycerate/mannosyl-3-phosphoglycerate phosphatase (269 aa).

Aspartate 6 serves as the catalytic Nucleophile. Positions 6, 8, and 210 each coordinate Mg(2+).

It belongs to the HAD-like hydrolase superfamily. MPGP family. In terms of assembly, monomer. Co(2+) serves as cofactor. Requires Mg(2+) as cofactor.

It catalyses the reaction (2R)-2-O-(alpha-D-glucopyranosyl)-3-phospho-glycerate + H2O = (2R)-2-O-(alpha-D-glucopyranosyl)-glycerate + phosphate. The catalysed reaction is 2-O-(alpha-D-mannosyl)-3-phosphoglycerate + H2O = (2R)-2-O-(alpha-D-mannosyl)-glycerate + phosphate. Its function is as follows. Involved in the biosynthesis of glucosylglycerate. Catalyzes the dephosphorylation of glucosyl-3-phosphoglycerate (GPG) and mannosyl-3-phosphoglycerate (MPG) to glucosylglycerate (GG) and mannosylglycerate (MG), respectively. The chain is Glucosyl-3-phosphoglycerate/mannosyl-3-phosphoglycerate phosphatase from Persephonella marina (strain DSM 14350 / EX-H1).